The sequence spans 77 residues: RNA-binding protein Hfq (77 aa).

The region spanning 10–70 (DAFLNHVRKT…ISTVMPAQPI (61 aa)) is the Sm domain.

It belongs to the Hfq family. As to quaternary structure, homohexamer.

In terms of biological role, RNA chaperone that binds small regulatory RNA (sRNAs) and mRNAs to facilitate mRNA translational regulation in response to envelope stress, environmental stress and changes in metabolite concentrations. Also binds with high specificity to tRNAs. The chain is RNA-binding protein Hfq from Jannaschia sp. (strain CCS1).